The primary structure comprises 1202 residues: PAN2-PAN3 deadenylation complex catalytic subunit PAN2 (1202 aa).

4 WD repeats span residues 153–193, 195–231, 244–280, and 328–367; these read DENE…QKYA, ETPG…VEHE, VHGN…AITP, and PVGP…SFNP. The interval 368 to 485 is linker; it reads YSRETEFALP…VGREEEPHLH (118 aa). Residues 486-924 form the USP domain; it reads MVSKKYRKVT…VPAILYYVKR (439 aa). Ser-791 is modified (phosphoserine). Residues 975–1147 form the Exonuclease domain; that stretch reads VGLDAEFVTL…EDARTALQLY (173 aa). A divalent metal cation-binding residues include Asp-978, Glu-980, Asp-1087, and Asp-1139. Position 1189 is a phosphoserine (Ser-1189).

It belongs to the peptidase C19 family. PAN2 subfamily. As to quaternary structure, forms a heterotrimer with an asymmetric homodimer of the regulatory subunit PAN3 to form the poly(A)-nuclease (PAN) deadenylation complex. Interacts with PAN3 isoform 1/Pan3L and isoform 3/Pan3S. Interacts with ZFP36. Requires a divalent metal cation as cofactor.

The protein resides in the cytoplasm. Its subcellular location is the P-body. It localises to the nucleus. It carries out the reaction Exonucleolytic cleavage of poly(A) to 5'-AMP.. With respect to regulation, positively regulated by the regulatory subunit PAN3. Catalytic subunit of the poly(A)-nuclease (PAN) deadenylation complex, one of two cytoplasmic mRNA deadenylases involved in general and miRNA-mediated mRNA turnover. PAN specifically shortens poly(A) tails of RNA and the activity is stimulated by poly(A)-binding protein (PABP). PAN deadenylation is followed by rapid degradation of the shortened mRNA tails by the CCR4-NOT complex. Deadenylated mRNAs are then degraded by two alternative mechanisms, namely exosome-mediated 3'-5' exonucleolytic degradation, or deadenylation-dependent mRNA decaping and subsequent 5'-3' exonucleolytic degradation by XRN1. Also acts as an important regulator of the HIF1A-mediated hypoxic response. Required for HIF1A mRNA stability independent of poly(A) tail length regulation. The protein is PAN2-PAN3 deadenylation complex catalytic subunit PAN2 of Homo sapiens (Human).